A 625-amino-acid chain; its full sequence is FMRFamide-activated amiloride-sensitive sodium channel (625 aa).

Residues 1-67 (MKYTSAATKP…IVTSRDTKRK (67 aa)) lie on the Cytoplasmic side of the membrane. Residues 68-89 (VIWALLVIAGFTAATLQLSLLV) traverse the membrane as a helical segment. Residues 90–536 (RKYLQFQVVE…LADLFADIGG (447 aa)) are Extracellular-facing. N-linked (GlcNAc...) asparagine glycosylation is found at N134, N196, N303, N349, N365, N372, and N473. The helical transmembrane segment at 537–557 (TLGLWMGISVLTIMELIELVI) threads the bilayer. The Cytoplasmic segment spans residues 558–625 (RLTGLVFNSE…DFRRGVESPV (68 aa)). Positions 570–591 (LPRGPTTVNNNNGSNNHSQSTS) are disordered. Positions 575-591 (TTVNNNNGSNNHSQSTS) are enriched in low complexity.

It belongs to the amiloride-sensitive sodium channel (TC 1.A.6) family. Muscle and nervous tissue.

The protein resides in the membrane. Its function is as follows. FMRFamide-gated ionotropic receptor. This is FMRFamide-activated amiloride-sensitive sodium channel from Cornu aspersum (Brown garden snail).